The primary structure comprises 765 residues: Zinc finger and BTB domain-containing protein 49 (765 aa).

A BTB domain is found at 25–91 (CDCMLVVKGV…MYTSHLDLNQ (67 aa)). 2 disordered regions span residues 165–203 (QQNK…GSCT) and 275–294 (NFLA…DATC). 7 consecutive C2H2-type zinc fingers follow at residues 395 to 417 (YACE…KRSH), 423 to 445 (FECN…LRRH), 451 to 473 (YICE…IIIH), 479 to 501 (HLCD…KKTH), 507 to 529 (FTCD…RIRH), 535 to 557 (YSCS…VRTH), and 563 to 585 (YTCE…KKMH).

The protein belongs to the krueppel C2H2-type zinc-finger protein family. In terms of assembly, isoform 1 interacts with EP300 and KAT5/Tip60. The interaction with EP300 is direct and leads to synergistic induction of CDKN1A. On the CDKN1A promoter, forms a complex with ZBTB17/Miz-1; this interaction leads to additive CDKN1A transactivation. Isoform 3 also interacts with ZBTB17; this interaction may block ZBTB17 repressor activity. As to expression, highly expressed in normal epidermis and in other epithelial tissues, including in colon and lung. Tends to be down-regulated in colon, lung and skin cancer tissues.

Its subcellular location is the cytoplasm. It is found in the nucleus. Functionally, transcription factor. Inhibits cell proliferation by activating either CDKN1A/p21 transcription or RB1 transcription. Its function is as follows. Binds CDKN1A promoter and activates its transcription; this activity is further potentiated in the presence of EP300 (synergistic) and ZBTB17/Miz-1 (additive). In terms of biological role, activates RB1 transcription most probably by antagonizing ZBTB17 repression of RB1. Does not bind directly RB1 promoter. The protein is Zinc finger and BTB domain-containing protein 49 (ZBTB49) of Homo sapiens (Human).